Here is a 670-residue protein sequence, read N- to C-terminus: Oligopeptidase PepF (670 aa).

Residue histidine 456 coordinates Zn(2+). Glutamate 457 is a catalytic residue. Zn(2+)-binding residues include histidine 460 and histidine 463.

This sequence belongs to the peptidase M3B family. Zn(2+) is required as a cofactor.

It localises to the cytoplasm. Its function is as follows. Overexpression results in inhibition of sporulation initiation. This sporulation deficiency could be the result of hydrolysis by PepF of the PhrA peptide, a phosphatase regulator. Thus, overexpression of PepF appears to act at the level of the phosphorelay, most likely through modulation of the negative role played by phosphatases. Overexpression of PepF also affects the activity of the competence and sporulation stimulating factor PhrC. This is Oligopeptidase PepF from Bacillus subtilis (strain 168).